Here is a 165-residue protein sequence, read N- to C-terminus: Protein eva-1 homolog B (165 aa).

Residues 29 to 49 (GLYFVLGVCFGLLLTLCLLVI) traverse the membrane as a helical segment. Disordered regions lie at residues 57–109 (PRPR…GPLN) and 143–165 (LLGT…MHYY). Residues 74 to 84 (EPEDDDEDEED) are compositionally biased toward acidic residues. Phosphothreonine is present on residues Thr-85, Thr-148, and Thr-158.

This sequence belongs to the EVA1 family.

Its subcellular location is the membrane. The protein is Protein eva-1 homolog B (EVA1B) of Homo sapiens (Human).